Here is a 584-residue protein sequence, read N- to C-terminus: Arginine--tRNA ligase (584 aa).

The 'HIGH' region signature appears at 127–137; that stretch reads PNTNKPLHVGH.

Belongs to the class-I aminoacyl-tRNA synthetase family. Monomer.

The protein localises to the cytoplasm. It carries out the reaction tRNA(Arg) + L-arginine + ATP = L-arginyl-tRNA(Arg) + AMP + diphosphate. This chain is Arginine--tRNA ligase, found in Borrelia turicatae (strain 91E135).